A 788-amino-acid chain; its full sequence is Ciliated left-right organizer metallopeptidase (788 aa).

The N-terminal stretch at 1-20 (MLLLLLLLLLLPPLVLRVAA) is a signal peptide. At 21-735 (SRCLHDETQK…DHNPSMTHLR (715 aa)) the chain is on the extracellular side. Positions 40-56 (SQLPSKSRSSSLTLPSS) are enriched in low complexity. Residues 40-59 (SQLPSKSRSSSLTLPSSRDP) form a disordered region. Histidine 305 contacts Zn(2+). Glutamate 306 is a catalytic residue. Histidine 309 contributes to the Zn(2+) binding site. Asparagine 333 is a glycosylation site (N-linked (GlcNAc...) asparagine). Histidine 385 is a binding site for Zn(2+). Residues asparagine 425, asparagine 491, asparagine 524, and asparagine 713 are each glycosylated (N-linked (GlcNAc...) asparagine). The chain crosses the membrane as a helical span at residues 736 to 756 (LSMGLCLMLLILVGVMGTTAY). The Cytoplasmic portion of the chain corresponds to 757–788 (QKRATLPVRPSASYHSPELHSTRVPVRGIREV). Residues 767-788 (SASYHSPELHSTRVPVRGIREV) form a disordered region.

Belongs to the peptidase M8 family. Zn(2+) serves as cofactor.

It is found in the membrane. Functionally, putative metalloproteinase that plays a role in left-right patterning process. This chain is Ciliated left-right organizer metallopeptidase, found in Homo sapiens (Human).